The chain runs to 441 residues: MPGDEKPVGVAVLGLGNVGSEVVRIIENSAEDLAARVGAPLVLRGIGVRRVTTDRGVPIELLTDDIEELVAREDVDIVVEVMGPVEPSRKAILGALERGKSVVTANKALLATSTGELAQAAESAHVDLYFEAAVAGAIPVIRPLTQSLAGDTVLRVAGIVNGTTNYILSAMDSTGADYASALADASALGYAEADPTADVEGYDAAAKAAILASIAFHTRVTADDVYREGITKVTPADFGSAHALGCTIKLLSICERITTDEGSQRVSARVYPALVPLSHPLAAVNGAFNAVVVEAEAAGRLMFYGQGAGGAPTASAVTGDLVMAARNRVLGSRGPRESKYAQLPVAPMGFIETRYYVSMNVADKPGVLSAVAAEFAKREVSIAEVRQEGVVDEGGRRVGARIVVVTHLATDAALSETVDALDDLDVVQGVSSVIRLEGTGL.

NADP(+) is bound by residues asparagine 17 and valine 18. Positions 18, 37, and 47 each coordinate NAD(+). Residue valine 18 participates in NADPH binding. NADP(+) is bound by residues arginine 49, arginine 50, and lysine 107. Residue arginine 49 coordinates NADPH. Lysine 107 is an NADPH binding site. Residues glutamate 131, valine 134, glycine 136, and isoleucine 138 each contribute to the Na(+) site. Glycine 189 and glutamate 192 together coordinate NADP(+). L-homoserine contacts are provided by glutamate 192 and aspartate 203. The Proton donor role is filled by lysine 207. Glycine 309 provides a ligand contact to NADP(+). Glycine 309 contacts NAD(+). Glycine 309 contributes to the NADPH binding site. The ACT domain maps to 356 to 435 (YVSMNVADKP…VVQGVSSVIR (80 aa)).

The protein belongs to the homoserine dehydrogenase family. It depends on a metal cation as a cofactor.

It carries out the reaction L-homoserine + NADP(+) = L-aspartate 4-semialdehyde + NADPH + H(+). The catalysed reaction is L-homoserine + NAD(+) = L-aspartate 4-semialdehyde + NADH + H(+). It participates in amino-acid biosynthesis; L-methionine biosynthesis via de novo pathway; L-homoserine from L-aspartate: step 3/3. Its pathway is amino-acid biosynthesis; L-threonine biosynthesis; L-threonine from L-aspartate: step 3/5. Catalyzes the conversion of L-aspartate-beta-semialdehyde (L-Asa) to L-homoserine (L-Hse), the third step in the biosynthesis of threonine and methionine from aspartate. The protein is Homoserine dehydrogenase (hom) of Mycobacterium tuberculosis (strain CDC 1551 / Oshkosh).